Here is a 278-residue protein sequence, read N- to C-terminus: Phosphatidylglycerol--prolipoprotein diacylglyceryl transferase (278 aa).

Transmembrane regions (helical) follow at residues 18-38, 55-75, 90-110, and 115-135; these read IQVH…TILA, LILW…VIFE, WDGG…VYLF, and WIPV…AQGI. Arg137 contributes to the a 1,2-diacyl-sn-glycero-3-phospho-(1'-sn-glycerol) binding site. The next 3 helical transmembrane spans lie at 177–197, 207–227, and 237–257; these read QPTF…LMSL, GEVF…VEGM, and IRVS…ILVF.

It belongs to the Lgt family.

It localises to the cell membrane. It carries out the reaction L-cysteinyl-[prolipoprotein] + a 1,2-diacyl-sn-glycero-3-phospho-(1'-sn-glycerol) = an S-1,2-diacyl-sn-glyceryl-L-cysteinyl-[prolipoprotein] + sn-glycerol 1-phosphate + H(+). The protein operates within protein modification; lipoprotein biosynthesis (diacylglyceryl transfer). In terms of biological role, catalyzes the transfer of the diacylglyceryl group from phosphatidylglycerol to the sulfhydryl group of the N-terminal cysteine of a prolipoprotein, the first step in the formation of mature lipoproteins. The protein is Phosphatidylglycerol--prolipoprotein diacylglyceryl transferase of Pediococcus pentosaceus (strain ATCC 25745 / CCUG 21536 / LMG 10740 / 183-1w).